The sequence spans 365 residues: Gibberellin 20 oxidase 1-A (365 aa).

One can recognise a Fe2OG dioxygenase domain in the interval 199–299 (GNDSIMRLNY…RKSLAFFLCP (101 aa)). Fe cation contacts are provided by histidine 224, aspartate 226, and histidine 280. Arginine 290 is an active-site residue.

It belongs to the iron/ascorbate-dependent oxidoreductase family. GA20OX subfamily. The cofactor is Fe cation. L-ascorbate is required as a cofactor. As to expression, expressed in nodes and the ear of the elongating stem.

It carries out the reaction gibberellin A12 + 2 2-oxoglutarate + 3 O2 + H(+) = gibberellin A9 + 2 succinate + 3 CO2 + 2 H2O. The enzyme catalyses gibberellin A53 + 2 2-oxoglutarate + 3 O2 + H(+) = gibberellin A20 + 2 succinate + 3 CO2 + 2 H2O. Its function is as follows. Key oxidase enzyme in the biosynthesis of gibberellin that catalyzes the conversion of GA12 and GA53 to GA9 and GA20 respectively, via a three-step oxidation at C-20 of the GA skeleton. The sequence is that of Gibberellin 20 oxidase 1-A (GA20ox1A) from Triticum aestivum (Wheat).